A 571-amino-acid polypeptide reads, in one-letter code: Proline--tRNA ligase (571 aa).

It belongs to the class-II aminoacyl-tRNA synthetase family. ProS type 1 subfamily. Homodimer.

It is found in the cytoplasm. It carries out the reaction tRNA(Pro) + L-proline + ATP = L-prolyl-tRNA(Pro) + AMP + diphosphate. In terms of biological role, catalyzes the attachment of proline to tRNA(Pro) in a two-step reaction: proline is first activated by ATP to form Pro-AMP and then transferred to the acceptor end of tRNA(Pro). As ProRS can inadvertently accommodate and process non-cognate amino acids such as alanine and cysteine, to avoid such errors it has two additional distinct editing activities against alanine. One activity is designated as 'pretransfer' editing and involves the tRNA(Pro)-independent hydrolysis of activated Ala-AMP. The other activity is designated 'posttransfer' editing and involves deacylation of mischarged Ala-tRNA(Pro). The misacylated Cys-tRNA(Pro) is not edited by ProRS. The sequence is that of Proline--tRNA ligase from Proteus mirabilis (strain HI4320).